Consider the following 777-residue polypeptide: Histone-lysine N-methyltransferase set9 (777 aa).

Residues 117–231 (CPFEVNATNR…VGEEITVTYS (115 aa)) enclose the SET domain. Disordered regions lie at residues 263–414 (AVQK…ILSP) and 682–718 (RMGS…QGQY). Over residues 291–301 (TALQASRTPSV) the composition is skewed to polar residues. The span at 323-337 (TSTTDSAAQGAGADG) shows a compositional bias: low complexity. Polar residues-rich tracts occupy residues 371 to 405 (TAPS…QGSE) and 688 to 698 (KQGSSAPSTKG).

This sequence belongs to the class V-like SAM-binding methyltransferase superfamily. Histone-lysine methyltransferase family. Suvar4-20 subfamily.

It localises to the nucleus. Its subcellular location is the chromosome. It catalyses the reaction L-lysyl(20)-[histone H4] + 3 S-adenosyl-L-methionine = N(6),N(6),N(6)-trimethyl-L-lysyl(20)-[histone H4] + 3 S-adenosyl-L-homocysteine + 3 H(+). Histone methyltransferase that trimethylates 'Lys-20' of histone H4 to form H4K20me3. In Neurospora crassa (strain ATCC 24698 / 74-OR23-1A / CBS 708.71 / DSM 1257 / FGSC 987), this protein is Histone-lysine N-methyltransferase set9 (hlm-1).